The following is a 761-amino-acid chain: Ribonucleoside-diphosphate reductase subunit alpha (761 aa).

Residues 5–95 (LFVTKRNGKI…IFHLRKKAFG (91 aa)) enclose the ATP-cone domain. ATP-binding positions include lysine 9, 15-21 (ELINLDK), threonine 55, and lysine 91. Residue threonine 209 coordinates GDP. A disulfide bridge connects residues cysteine 225 and cysteine 462. DTTP is bound by residues 232–234 (DNL), arginine 262, and arginine 269. Asparagine 437 contributes to the GDP binding site. The active-site Proton acceptor is asparagine 437. Cysteine 439 functions as the Cysteine radical intermediate in the catalytic mechanism. GDP contacts are provided by residues glutamate 441 and 623-625 (ETS). Glutamate 441 functions as the Proton acceptor in the catalytic mechanism.

Belongs to the ribonucleoside diphosphate reductase large chain family. As to quaternary structure, tetramer of two alpha and two beta subunits.

It catalyses the reaction a 2'-deoxyribonucleoside 5'-diphosphate + [thioredoxin]-disulfide + H2O = a ribonucleoside 5'-diphosphate + [thioredoxin]-dithiol. Its activity is regulated as follows. Under complex allosteric control mediated by deoxynucleoside triphosphates and ATP binding to separate specificity and activation sites on the alpha subunit. The type of nucleotide bound at the specificity site determines substrate preference. It seems probable that ATP makes the enzyme reduce CDP and UDP, dGTP favors ADP reduction and dTTP favors GDP reduction. Stimulated by ATP and inhibited by dATP binding to the activity site. Functionally, provides the precursors necessary for DNA synthesis. Catalyzes the biosynthesis of deoxyribonucleotides from the corresponding ribonucleotides. This chain is Ribonucleoside-diphosphate reductase subunit alpha (nrdA), found in Buchnera aphidicola subsp. Baizongia pistaciae (strain Bp).